The sequence spans 276 residues: Type II pantothenate kinase (276 aa).

8–15 (DAGGTLTK) serves as a coordination point for ATP. E76 serves as the catalytic Proton acceptor. Residues T105, 127 to 131 (GGTIM), F143, and S230 contribute to the ATP site.

Belongs to the type II pantothenate kinase family. Homodimer.

The protein resides in the cytoplasm. The catalysed reaction is (R)-pantothenate + ATP = (R)-4'-phosphopantothenate + ADP + H(+). The protein operates within cofactor biosynthesis; coenzyme A biosynthesis; CoA from (R)-pantothenate: step 1/5. In terms of biological role, catalyzes the phosphorylation of pantothenate (Pan), the first step in CoA biosynthesis. The chain is Type II pantothenate kinase from Bacillus cereus (strain ATCC 10987 / NRS 248).